A 95-amino-acid chain; its full sequence is Aspartyl/glutamyl-tRNA(Asn/Gln) amidotransferase subunit C (95 aa).

The protein belongs to the GatC family. Heterotrimer of A, B and C subunits.

The catalysed reaction is L-glutamyl-tRNA(Gln) + L-glutamine + ATP + H2O = L-glutaminyl-tRNA(Gln) + L-glutamate + ADP + phosphate + H(+). The enzyme catalyses L-aspartyl-tRNA(Asn) + L-glutamine + ATP + H2O = L-asparaginyl-tRNA(Asn) + L-glutamate + ADP + phosphate + 2 H(+). Its function is as follows. Allows the formation of correctly charged Asn-tRNA(Asn) or Gln-tRNA(Gln) through the transamidation of misacylated Asp-tRNA(Asn) or Glu-tRNA(Gln) in organisms which lack either or both of asparaginyl-tRNA or glutaminyl-tRNA synthetases. The reaction takes place in the presence of glutamine and ATP through an activated phospho-Asp-tRNA(Asn) or phospho-Glu-tRNA(Gln). The sequence is that of Aspartyl/glutamyl-tRNA(Asn/Gln) amidotransferase subunit C from Chlorobium luteolum (strain DSM 273 / BCRC 81028 / 2530) (Pelodictyon luteolum).